We begin with the raw amino-acid sequence, 904 residues long: Serine/arginine repetitive matrix protein 1 (904 aa).

The residue at position 1 (Met-1) is an N-acetylmethionine. A necessary for DNA and RNA-binding region spans residues 1 to 151 (MDAGFFRGTS…ASMKKQDEDK (151 aa)). The segment at 1 to 156 (MDAGFFRGTS…QDEDKDKRDK (156 aa)) is necessary for mRNA 3'-end cleavage and cytoplasmic accumulation. At Arg-7 the chain carries Citrulline. One can recognise a PWI domain in the interval 27–126 (QLKFAECLEK…AGIPSAFLEL (100 aa)). Lys-127 is covalently cross-linked (Glycyl lysine isopeptide (Lys-Gly) (interchain with G-Cter in SUMO2)). Residues 139-170 (EKLASMKKQDEDKDKRDKEEKESSREKRERSR) are compositionally biased toward basic and acidic residues. The interval 139–904 (EKLASMKKQD…MRKAQVSPQS (766 aa)) is disordered. Lys-140 carries the N6-acetyllysine modification. Positions 171-207 (SPRRRKSRSPSPRRRSSPVRRERKRSHSRSPRHRTKS) are enriched in basic residues. Residues 214-234 (PEKKEKTPELPEPSVKVKEPS) are compositionally biased toward basic and acidic residues. At Thr-220 the chain carries Phosphothreonine. Ser-227 is modified (phosphoserine). Residue Lys-231 forms a Glycyl lysine isopeptide (Lys-Gly) (interchain with G-Cter in SUMO1); alternate linkage. Lys-231 participates in a covalent cross-link: Glycyl lysine isopeptide (Lys-Gly) (interchain with G-Cter in SUMO2); alternate. Residues Ser-234 and Ser-240 each carry the phosphoserine modification. Thr-241 carries the post-translational modification Phosphothreonine. Basic and acidic residues predominate over residues 246–275 (KVPKPEPIPEPKEPSPEKNSKKEKEKEKTR). Lys-249 participates in a covalent cross-link: Glycyl lysine isopeptide (Lys-Gly) (interchain with G-Cter in SUMO2). The residue at position 260 (Ser-260) is a Phosphoserine. Composition is skewed to basic residues over residues 276-329 (PRSR…RTPP) and 336-351 (PRHRRSRSPVRRRRRS). A necessary for speckles and matrix localization region spans residues 300-688 (RRHRSRSRSY…NKRHSPSPRP (389 aa)). The span at 352-368 (SASLSGSSSSSSSSRSR) shows a compositional bias: low complexity. Phosphoserine occurs at positions 389, 391, 393, and 402. Thr-406 carries the phosphothreonine modification. Ser-414 is subject to Phosphoserine. Residue Thr-416 is modified to Phosphothreonine. Ser-420, Ser-429, Ser-431, and Ser-436 each carry phosphoserine. The segment covering 428-438 (VSVSPGRTSGK) has biased composition (polar residues). Lys-447 is covalently cross-linked (Glycyl lysine isopeptide (Lys-Gly) (interchain with G-Cter in SUMO2)). Phosphoserine occurs at positions 450 and 452. Residue Lys-459 forms a Glycyl lysine isopeptide (Lys-Gly) (interchain with G-Cter in SUMO2) linkage. 2 positions are modified to phosphoserine: Ser-463 and Ser-465. Lys-472 participates in a covalent cross-link: Glycyl lysine isopeptide (Lys-Gly) (interchain with G-Cter in SUMO2). Ser-478 is subject to Phosphoserine. The segment covering 478–501 (SVQQRRQYRRQNQQSSSDSGSSSS) has biased composition (low complexity). A compositionally biased stretch (basic and acidic residues) spans 503-518 (EDERPKRSHVKNGEVG). A phosphoserine mark is found at Ser-524, Ser-526, Ser-528, Ser-530, Ser-532, Ser-549, and Ser-551. Positions 533-560 (PRKRQKETSPRGRRRRSPSPPPTRRRRS) are enriched in basic residues. Thr-555 is modified (phosphothreonine). Ser-560 and Ser-562 each carry phosphoserine. Over residues 567–592 (PRRRRTPTPPPRRRTPSPPPRRRSPS) the composition is skewed to basic residues. 3 positions are modified to phosphothreonine: Thr-572, Thr-574, and Thr-581. The residue at position 583 (Ser-583) is a Phosphoserine. Residues 593 to 605 (PRRYSPPIQRRYS) show a composition bias toward low complexity. Residue Tyr-596 is modified to Phosphotyrosine. A phosphoserine mark is found at Ser-597, Ser-605, and Ser-607. Thr-614 bears the Phosphothreonine mark. Residues Ser-616, Ser-626, Ser-628, Ser-636, and Ser-638 each carry the phosphoserine modification. Over residues 621–636 (PKRRASPSPPPKRRVS) the composition is skewed to basic residues. Over residues 649 to 663 (TKRRSPSLSSKHRKG) the composition is skewed to basic residues. Ser-694, Ser-695, Ser-696, Ser-705, Ser-707, Ser-713, and Ser-715 each carry phosphoserine. 2 stretches are compositionally biased toward low complexity: residues 701 to 719 (RRGASSSPQRRQSPSPSTR) and 736 to 759 (AASPSPQSVRRVSSSRSVSGSPEP). A Phosphothreonine modification is found at Thr-718. Phosphoserine is present on residues Ser-738, Ser-740, Ser-748, Ser-752, Ser-754, Ser-756, Ser-769, Ser-773, Ser-775, and Ser-777. The span at 771–786 (VQSQSPSTNWSPAVPV) shows a compositional bias: low complexity. A Phosphothreonine modification is found at Thr-778. Residues Ser-781 and Ser-791 each carry the phosphoserine modification. Thr-793 is subject to Phosphothreonine. 3 positions are modified to phosphoserine: Ser-795, Ser-797, and Ser-802. Over residues 809-834 (KKKKKKKDKKHKKDKKHKKHKKHKKE) the composition is skewed to basic residues. A compositionally biased stretch (low complexity) spans 837 to 866 (VAAAAAAAVTPAAIAAATTTLAQEEPVAAP). Residue Lys-869 forms a Glycyl lysine isopeptide (Lys-Gly) (interchain with G-Cter in SUMO2) linkage. At Thr-872 the chain carries Phosphothreonine. Ser-874 carries the post-translational modification Phosphoserine. A compositionally biased stretch (basic and acidic residues) spans 882-892 (DLEKHLREKAL). Position 901 is a phosphoserine (Ser-901).

This sequence belongs to the splicing factor SR family. As to quaternary structure, identified in the spliceosome C complex. Found in a pre-mRNA splicing complex with SFRS4, SFRS5, SNRP70, SNRPA1, SRRM1 and SRRM2. Found in a pre-mRNA exonic splicing enhancer (ESE) complex with SNRP70, SNRPA1, SRRM1 and TRA2B/SFRS10. Component of the minor spliceosome, which splices U12-type introns. Found in a mRNA splicing-dependent exon junction complex (EJC) with DEK, PRPF8, NCBP1, RBM8A, RNPS1, SRRM1 and ALYREF/THOC4. Interacts with DDX39B, CPSF1, RBM8A, RNPS1, and ALYREF/THOC4. Seems to be a compound of RNA export complexes that are released from speckles in a ATP-dependent manner. In terms of processing, phosphorylated on multiple serine and threonine residues by DYRK3 during the G2-to-M transition, after the nuclear-envelope breakdown. Phosphorylation by DYRK3 promotes disassembly of nuclear speckles. Citrullinated by PADI4.

It localises to the nucleus matrix. The protein resides in the nucleus speckle. Functionally, part of pre- and post-splicing multiprotein mRNP complexes. As a component of the minor spliceosome, involved in the splicing of U12-type introns in pre-mRNAs. Involved in numerous pre-mRNA processing events. Promotes constitutive and exonic splicing enhancer (ESE)-dependent splicing activation by bridging together sequence-specific (SR family proteins, SFRS4, SFRS5 and TRA2B/SFRS10) and basal snRNP (SNRP70 and SNRPA1) factors of the spliceosome. Stimulates mRNA 3'-end cleavage independently of the formation of an exon junction complex. Binds both pre-mRNA and spliced mRNA 20-25 nt upstream of exon-exon junctions. Binds RNA and DNA with low sequence specificity and has similar preference for either double- or single-stranded nucleic acid substrates. This Homo sapiens (Human) protein is Serine/arginine repetitive matrix protein 1 (SRRM1).